Reading from the N-terminus, the 803-residue chain is Volume-regulated anion channel subunit LRRC8C (803 aa).

At 1–22 (MIPVTEFRQFSEQQPAFRVLKP) the chain is on the cytoplasmic side. The chain crosses the membrane as a helical span at residues 23 to 43 (WWDVFTDYLSVAMLMIGVFGC). Over 44-125 (TLQVMQDKII…YERALHWYAK (82 aa)) the chain is Extracellular. Intrachain disulfides connect C54-C308 and C115-C293. N-linked (GlcNAc...) asparagine glycosylation is found at N64 and N70. A helical transmembrane segment spans residues 126–146 (YFPYLVLIHTLVFMLCSNFWF). Topologically, residues 147 to 266 (KFPGSSSKIE…ILYAMYVRQT (120 aa)) are cytoplasmic. The interval 177–209 (EVSGEDSEEKDNRKNNMSRSNTTQSGPEGSLVN) is disordered. Polar residues predominate over residues 191-209 (NNMSRSNTTQSGPEGSLVN). Phosphoserine is present on residues S212 and S215. The chain crosses the membrane as a helical span at residues 267–287 (VLKVIKFLIIIAYNSALVSKV). Topologically, residues 288–320 (QFTVDCNVDIQDMTGYKNFSCNHTMAHLFSKLS) are extracellular. The chain crosses the membrane as a helical span at residues 321–341 (FCYLCFVSIYGLTCLYTLYWL). Topologically, residues 342–803 (FYRSLKEYSF…SDVREQMKTE (462 aa)) are cytoplasmic. 17 LRR repeats span residues 397-419 (ENKL…QKLQ), 420-443 (TNAH…VFEI), 446-465 (LQSL…TIAQ), 468-490 (NLQE…SFLK), 492-513 (NLKV…MYGL), 515-536 (NLEE…VTLE), 543-563 (SLKI…VVDV), 566-586 (HLQK…NNLK), 590-611 (NLTE…VFSL), 613-634 (SLQE…VSFQ), 638-659 (KLTV…IKKL), 661-682 (SLER…LFLC), 684-705 (KIRY…IGVL), 707-728 (SLQY…LYFC), 730-751 (KLKT…IGNL), 753-774 (FLSY…LGDC), and 776-799 (ALKR…VREQ).

The protein belongs to the LRRC8 family. Heterohexamer; oligomerizes with other LRRC8 proteins (LRRC8A, LRRC8B, LRRC8D and/or LRRC8E) to form a heterohexamer. Homoheptamer; inactive, likely because it is not targeted to the plasma membrane in the absence of LRRC8A. In vivo, the subunit composition may depend primarily on expression levels, and heterooligomeric channels containing various proportions of the different LRRC8 proteins may coexist.

The protein localises to the cell membrane. It is found in the endoplasmic reticulum membrane. The catalysed reaction is chloride(in) = chloride(out). It catalyses the reaction iodide(out) = iodide(in). The enzyme catalyses taurine(out) = taurine(in). It carries out the reaction 2',3'-cGAMP(out) = 2',3'-cGAMP(in). Functionally, non-essential component of the volume-regulated anion channel (VRAC, also named VSOAC channel), an anion channel required to maintain a constant cell volume in response to extracellular or intracellular osmotic changes. The VRAC channel conducts iodide better than chloride and can also conduct organic osmolytes like taurine. Plays a redundant role in the efflux of amino acids, such as aspartate and glutamate, in response to osmotic stress. The VRAC channel also mediates transport of immunoreactive cyclic dinucleotide GMP-AMP (2'-3'-cGAMP), an immune messenger produced in response to DNA virus in the cytosol. Channel activity requires LRRC8A plus at least one other family member (LRRC8B, LRRC8C, LRRC8D or LRRC8E); channel characteristics depend on the precise subunit composition. The protein is Volume-regulated anion channel subunit LRRC8C of Bos taurus (Bovine).